The primary structure comprises 498 residues: ATP synthase subunit beta, chloroplastic (498 aa).

172–179 (GGAGVGKT) lines the ATP pocket.

This sequence belongs to the ATPase alpha/beta chains family. As to quaternary structure, F-type ATPases have 2 components, CF(1) - the catalytic core - and CF(0) - the membrane proton channel. CF(1) has five subunits: alpha(3), beta(3), gamma(1), delta(1), epsilon(1). CF(0) has four main subunits: a(1), b(1), b'(1) and c(9-12).

It localises to the plastid. The protein resides in the chloroplast thylakoid membrane. The catalysed reaction is ATP + H2O + 4 H(+)(in) = ADP + phosphate + 5 H(+)(out). In terms of biological role, produces ATP from ADP in the presence of a proton gradient across the membrane. The catalytic sites are hosted primarily by the beta subunits. The sequence is that of ATP synthase subunit beta, chloroplastic from Licuala grandis (Ruffled fan palm).